Reading from the N-terminus, the 642-residue chain is 1-deoxy-D-xylulose-5-phosphate synthase (642 aa).

Residues His73 and 114 to 116 (SHA) each bind thiamine diphosphate. Asp145 provides a ligand contact to Mg(2+). Thiamine diphosphate is bound by residues 146–147 (GA), Asn175, Phe286, and Glu367. Asn175 is a Mg(2+) binding site.

The protein belongs to the transketolase family. DXPS subfamily. In terms of assembly, homodimer. The cofactor is Mg(2+). Requires thiamine diphosphate as cofactor.

It carries out the reaction D-glyceraldehyde 3-phosphate + pyruvate + H(+) = 1-deoxy-D-xylulose 5-phosphate + CO2. It participates in metabolic intermediate biosynthesis; 1-deoxy-D-xylulose 5-phosphate biosynthesis; 1-deoxy-D-xylulose 5-phosphate from D-glyceraldehyde 3-phosphate and pyruvate: step 1/1. Catalyzes the acyloin condensation reaction between C atoms 2 and 3 of pyruvate and glyceraldehyde 3-phosphate to yield 1-deoxy-D-xylulose-5-phosphate (DXP). The sequence is that of 1-deoxy-D-xylulose-5-phosphate synthase from Saccharopolyspora erythraea (strain ATCC 11635 / DSM 40517 / JCM 4748 / NBRC 13426 / NCIMB 8594 / NRRL 2338).